We begin with the raw amino-acid sequence, 331 residues long: Cytosolic 5'-nucleotidase 3A (331 aa).

Asp-83 serves as the catalytic Nucleophile. 2 residues coordinate Mg(2+): Asp-83 and Asp-85. Asp-85 (proton donor) is an active-site residue. Residue Glu-130 participates in CMP binding. N(7)-methyl-GMP-binding residues include Glu-130 and Ser-151. Substrate is bound by residues Ser-198–Ala-199 and Lys-247. Asp-272 is a Mg(2+) binding site.

It belongs to the pyrimidine 5'-nucleotidase family.

The protein localises to the cytoplasm. The catalysed reaction is N(7)-methyl-GMP + H2O = N(7)-methylguanosine + phosphate. The enzyme catalyses a ribonucleoside 5'-phosphate + H2O = a ribonucleoside + phosphate. Functionally, nucleotidase which shows specific activity towards cytidine monophosphate (CMP) and 7-methylguanosine monophosphate (m(7)GMP). CMP seems to be the preferred substrate. The polypeptide is Cytosolic 5'-nucleotidase 3A (NT5C3A) (Gallus gallus (Chicken)).